The primary structure comprises 251 residues: UDP-N-acetylglucosamine--dolichyl-phosphate N-acetylglucosaminyltransferase (251 aa).

Residues 150-167 (VGNLGLSFITFLLGGYYV) traverse the membrane as a helical segment.

The protein belongs to the glycosyltransferase 2 family.

The protein localises to the cell membrane. The catalysed reaction is a di-trans,poly-cis-dolichyl phosphate + UDP-N-acetyl-alpha-D-glucosamine = an N-acetyl-alpha-D-glucosaminyl-phospho-di-trans,poly-cis-dolichol + UDP. It functions in the pathway cell surface structure biogenesis; S-layer biogenesis. The protein operates within protein modification; protein glycosylation. Functionally, involved in the assembly of an N-linked disaccharide that decorates the S-layer glycoprotein and flagellins. AglK initiates N-linked glycosylation through the formation of alpha-linked dolichyl monophosphate N-acetylglucosamine. It catalyzes the transfer of GlcNAc from the donor substrate UDP-GlcNAc to dolichyl phosphate C55 (Dol-P) to yield Dol-P-GlcNAc. AglK reaction proceeds with retention of stereochemistry. The reaction is specific for UDP-GlcNAc. AglK shows a stronger preference for short dolichol (C55-60 Dol-P) substrates compared with the longer (C85-105 Dol-P). The protein is UDP-N-acetylglucosamine--dolichyl-phosphate N-acetylglucosaminyltransferase of Methanococcus voltae.